A 299-amino-acid polypeptide reads, in one-letter code: Inactive recombination-promoting nuclease-like protein RpnE (299 aa).

Belongs to the Rpn/YhgA-like nuclease family.

Its function is as follows. Upon expression has no effect on RecA-independent DNA recombination, cell viability or DNA damage. This is Inactive recombination-promoting nuclease-like protein RpnE (yfaD) from Escherichia coli (strain K12).